Reading from the N-terminus, the 62-residue chain is Beta-defensin 110 (62 aa).

Residues 1 to 21 (MKIHLFFFILLFWVTILPARS) form the signal peptide. Intrachain disulfides connect cysteine 32–cysteine 60, cysteine 39–cysteine 53, and cysteine 43–cysteine 61.

The protein belongs to the beta-defensin family.

Its subcellular location is the secreted. In terms of biological role, has antibacterial activity. In Canis lupus familiaris (Dog), this protein is Beta-defensin 110 (DEFB110).